A 180-amino-acid chain; its full sequence is Small ribosomal subunit protein uS5 (180 aa).

Positions 1–20 (MAKMQGRMQGKVAPGDDRGD) are disordered. In terms of domain architecture, S5 DRBM spans 22–85 (LKEKMVAINR…DEARRKMIKV (64 aa)).

It belongs to the universal ribosomal protein uS5 family. Part of the 30S ribosomal subunit. Contacts proteins S4 and S8.

Functionally, with S4 and S12 plays an important role in translational accuracy. In terms of biological role, located at the back of the 30S subunit body where it stabilizes the conformation of the head with respect to the body. The polypeptide is Small ribosomal subunit protein uS5 (Nitrosospira multiformis (strain ATCC 25196 / NCIMB 11849 / C 71)).